The sequence spans 420 residues: Ribulose bisphosphate carboxylase large chain (420 aa).

Substrate-binding residues include N103 and T153. K155 serves as the catalytic Proton acceptor. Position 157 (K157) interacts with substrate. Mg(2+) contacts are provided by K181, D183, and E184. An N6-carboxylysine modification is found at K181. H274 acts as the Proton acceptor in catalysis. Substrate-binding residues include R275, H307, and S359.

Belongs to the RuBisCO large chain family. Type I subfamily. As to quaternary structure, heterohexadecamer of 8 large chains and 8 small chains; disulfide-linked. The disulfide link is formed within the large subunit homodimers. Mg(2+) is required as a cofactor. In terms of processing, the disulfide bond which can form in the large chain dimeric partners within the hexadecamer appears to be associated with oxidative stress and protein turnover.

It is found in the plastid. The protein localises to the chloroplast. The enzyme catalyses 2 (2R)-3-phosphoglycerate + 2 H(+) = D-ribulose 1,5-bisphosphate + CO2 + H2O. It catalyses the reaction D-ribulose 1,5-bisphosphate + O2 = 2-phosphoglycolate + (2R)-3-phosphoglycerate + 2 H(+). In terms of biological role, ruBisCO catalyzes two reactions: the carboxylation of D-ribulose 1,5-bisphosphate, the primary event in carbon dioxide fixation, as well as the oxidative fragmentation of the pentose substrate in the photorespiration process. Both reactions occur simultaneously and in competition at the same active site. The sequence is that of Ribulose bisphosphate carboxylase large chain from Anemia mexicana (Mexican fern).